The sequence spans 385 residues: tRNA pseudouridine synthase D (385 aa).

The active-site Nucleophile is the Asp65. Positions 143-345 (GCENYFGEQR…SDGVRKAFFK (203 aa)) constitute a TRUD domain.

The protein belongs to the pseudouridine synthase TruD family.

It carries out the reaction uridine(13) in tRNA = pseudouridine(13) in tRNA. Its function is as follows. Responsible for synthesis of pseudouridine from uracil-13 in transfer RNAs. The sequence is that of tRNA pseudouridine synthase D from Aquifex aeolicus (strain VF5).